The following is a 223-amino-acid chain: F420-dependent NADP reductase (223 aa).

Residues 9 to 12 (TGDQ), 30 to 31 (SR), K35, L75, and V101 contribute to the NADP(+) site.

This sequence belongs to the F420-dependent NADP reductase family.

The enzyme catalyses reduced coenzyme F420-(gamma-L-Glu)(n) + NADP(+) = oxidized coenzyme F420-(gamma-L-Glu)(n) + NADPH + 2 H(+). In terms of biological role, catalyzes the reduction of NADP(+) with F420H(2) via hydride transfer, and the reverse reaction, i.e. the reduction of F420 with NADPH. Probably functions in the regeneration of NADPH required in biosynthetic reactions. In Methanocaldococcus jannaschii (strain ATCC 43067 / DSM 2661 / JAL-1 / JCM 10045 / NBRC 100440) (Methanococcus jannaschii), this protein is F420-dependent NADP reductase (fno).